We begin with the raw amino-acid sequence, 1066 residues long: Vinculin (1066 aa).

The tract at residues 1-835 (MPVFHTRTIE…GAVAKVREAF (835 aa)) is N-terminal globular head. Ser97 bears the Phosphoserine mark. The segment at 168-208 (MTKMAKMIDERQQELTHQEHRVMLVNSMNTVKELLPVLISA) is talin-interaction. An N6-acetyllysine modification is found at Lys173. Repeat copies occupy residues 259–369 (ASKD…KVEN), 370–479 (AARK…KTNR), and 480–589 (AVAN…QMQE). Residues 259-589 (ASKDTEAMKR…LKDLKTQMQE (331 aa)) form a 3 X 112 AA tandem repeats region. A phosphoserine mark is found at Ser260, Ser272, Ser275, Ser290, Ser346, and Ser434. Lys496 carries the N6-acetyllysine modification. Phosphotyrosine is present on Tyr537. Phosphoserine is present on residues Ser574, Ser579, and Ser600. Thr604 and Thr672 each carry phosphothreonine. Ser721 bears the Phosphoserine mark. An interaction with ACTN4 region spans residues 741–764 (MANIQPQMLVAGATSIARRANRIL). A phosphoserine mark is found at Ser795 and Ser809. Position 822 is a phosphotyrosine (Tyr822). The segment at 836 to 878 (QPQEPDFPPPPPDLEQLRLTDELAPPKPPLPEGEVPPPRPPPP) is linker (Pro-rich). Positions 857-887 (ELAPPKPPLPEGEVPPPRPPPPEEKDEEFPE) are disordered. Pro residues predominate over residues 860-876 (PPKPPLPEGEVPPPRPP). The interval 879–1066 (EEKDEEFPEQ…RWVRKTPWYQ (188 aa)) is C-terminal tail. 2 facilitates phospholipid membrane insertion regions span residues 935–978 (RLVR…KRIR) and 1052–1066 (AGFT…PWYQ). Tyr1065 is subject to Phosphotyrosine; by SRC-type Tyr-kinases.

The protein belongs to the vinculin/alpha-catenin family. In terms of assembly, exhibits self-association properties. Part of a complex composed of THSD1, PTK2/FAK1, TLN1 and VCL. Interacts with APBB1IP, NRAP and TLN1. Interacts with CTNNB1 and this interaction is necessary for its localization to the cell-cell junctions and for its function in regulating cell surface expression of E-cadherin. Interacts with SORBS1. Interacts with SYNM. Interacts with CTNNA1. Binds to ACTN4; this interaction triggers conformational changes. Interacts with FLII. Post-translationally, phosphorylated; on serines, threonines and tyrosines. Phosphorylation on Tyr-1065 in activated platelets affects head-tail interactions and cell spreading but has no effect on actin binding nor on localization to focal adhesion plaques. In terms of processing, acetylated; mainly by myristic acid but also by a small amount of palmitic acid.

It localises to the cell membrane. The protein resides in the cell junction. The protein localises to the adherens junction. Its subcellular location is the focal adhesion. It is found in the cytoplasm. It localises to the cytoskeleton. The protein resides in the sarcolemma. The protein localises to the cell projection. Its subcellular location is the podosome. Functionally, actin filament (F-actin)-binding protein involved in cell-matrix adhesion and cell-cell adhesion. Regulates cell-surface E-cadherin expression and potentiates mechanosensing by the E-cadherin complex. May also play important roles in cell morphology and locomotion. The chain is Vinculin from Rattus norvegicus (Rat).